The following is a 1423-amino-acid chain: Protein phosphatase Slingshot homolog 2 (1423 aa).

The interval 1–37 (MALVTVQRSPTPSTTSSPCASEADSGEEECRSQPRSI) is disordered. Positions 9–18 (SPTPSTTSSP) are enriched in low complexity. Residues Ser-17, Ser-25, and Ser-36 each carry the phosphoserine modification. Residues 248 to 303 (ERTERLIKTKLREIMMQKDLENITSKEIRTELEMQMVCNLREFKEFIDNEMIVILG) form the DEK-C domain. The Tyrosine-protein phosphatase domain occupies 307-448 (SPTQIFEHVF…LEEYQGILLA (142 aa)). Cys-392 (phosphocysteine intermediate) is an active-site residue. Residues Ser-461, Ser-487, Ser-534, Ser-631, and Ser-633 each carry the phosphoserine modification. Disordered regions lie at residues 617 to 641 (TSPL…CQTE), 664 to 684 (QETR…GGRN), 696 to 728 (PSKV…QSKA), 797 to 825 (ENKP…MCNP), 840 to 862 (EGEP…AKWY), 877 to 954 (LRQE…NATV), 962 to 981 (FDHL…TQQE), 1019 to 1041 (TSPN…EQGL), 1070 to 1108 (SLHP…SSLS), and 1144 to 1179 (TEQS…YKDS). The span at 621 to 635 (KDPPMSPDPESPSPQ) shows a compositional bias: pro residues. A compositionally biased stretch (basic and acidic residues) spans 664-680 (QETRSRSFSHSRMEELG). The segment covering 889 to 904 (TCTSLSTRKNSKNDSS) has biased composition (polar residues). Basic and acidic residues predominate over residues 910–932 (PKGKSDEAPPEHSFVLKEPEMSK). Positions 941–953 (EAGSLSHSEQNAT) are enriched in polar residues. The span at 1019-1034 (TSPNHTGPGSEIATSE) shows a compositional bias: polar residues. Residues 1144–1172 (TEQSSTTDEPSAEQVSWEESQESPLSSGS) are compositionally biased toward polar residues. The residue at position 1217 (Ser-1217) is a Phosphoserine. Thr-1422 carries the post-translational modification Phosphothreonine.

Belongs to the protein-tyrosine phosphatase family. As to quaternary structure, interacts with filamentous actin.

The protein resides in the cytoplasm. Its subcellular location is the cytoskeleton. It is found in the cell junction. The protein localises to the focal adhesion. It localises to the cytoplasmic vesicle. The protein resides in the secretory vesicle. Its subcellular location is the acrosome. It carries out the reaction O-phospho-L-tyrosyl-[protein] + H2O = L-tyrosyl-[protein] + phosphate. The enzyme catalyses O-phospho-L-seryl-[protein] + H2O = L-seryl-[protein] + phosphate. The catalysed reaction is O-phospho-L-threonyl-[protein] + H2O = L-threonyl-[protein] + phosphate. Functionally, protein phosphatase which regulates actin filament dynamics. Dephosphorylates and activates the actin binding/depolymerizing factor cofilin, which subsequently binds to actin filaments and stimulates their disassembly. Inhibitory phosphorylation of cofilin is mediated by LIMK1, which may also be dephosphorylated and inactivated by this protein. Required for spermatogenesis. Involved in acrosome biogenesis, probably by regulating cofilin-mediated actin cytoskeleton remodeling during proacrosomal vesicle fusion and/or Golgi to perinuclear vesicle trafficking. The protein is Protein phosphatase Slingshot homolog 2 (SSH2) of Homo sapiens (Human).